The chain runs to 339 residues: NADH-quinone oxidoreductase subunit H (339 aa).

9 helical membrane passes run I9–C29, P50–F70, I82–I102, V115–G135, M161–I181, M187–L207, M235–T255, I275–I295, and G311–V331.

The protein belongs to the complex I subunit 1 family. As to quaternary structure, NDH-1 is composed of 14 different subunits. Subunits NuoA, H, J, K, L, M, N constitute the membrane sector of the complex.

Its subcellular location is the cell inner membrane. The catalysed reaction is a quinone + NADH + 5 H(+)(in) = a quinol + NAD(+) + 4 H(+)(out). NDH-1 shuttles electrons from NADH, via FMN and iron-sulfur (Fe-S) centers, to quinones in the respiratory chain. The immediate electron acceptor for the enzyme in this species is believed to be ubiquinone. Couples the redox reaction to proton translocation (for every two electrons transferred, four hydrogen ions are translocated across the cytoplasmic membrane), and thus conserves the redox energy in a proton gradient. This subunit may bind ubiquinone. The chain is NADH-quinone oxidoreductase subunit H from Rickettsia conorii (strain ATCC VR-613 / Malish 7).